The following is an 850-amino-acid chain: RPA-related protein RADX (850 aa).

A disordered region spans residues 1–31 (MSGESGQPQPGPSHAGLYLEHPERDQAGVPG). The segment at residues 228–331 (WNSRKNFPAL…LISTMEICLN (104 aa)) is a DNA-binding region (OB). Disordered stretches follow at residues 575–612 (EAFW…MGSQ) and 632–671 (GPSA…GKSR). Residues 590-608 (GKEDHCHERGSKRSQDDRP) show a composition bias toward basic and acidic residues. Polar residues predominate over residues 643–668 (PHSSAQMKGSKHNTPSQESSTAYTTG).

The protein localises to the chromosome. Single-stranded DNA-binding protein recruited to replication forks to maintain genome stability. Prevents fork collapse by antagonizing the accumulation of RAD51 at forks to ensure the proper balance of fork remodeling and protection without interfering with the capacity of cells to complete homologous recombination of double-strand breaks. This Mus musculus (Mouse) protein is RPA-related protein RADX.